The sequence spans 334 residues: S-adenosylmethionine:tRNA ribosyltransferase-isomerase (334 aa).

This sequence belongs to the QueA family. In terms of assembly, monomer.

It is found in the cytoplasm. It carries out the reaction 7-aminomethyl-7-carbaguanosine(34) in tRNA + S-adenosyl-L-methionine = epoxyqueuosine(34) in tRNA + adenine + L-methionine + 2 H(+). It functions in the pathway tRNA modification; tRNA-queuosine biosynthesis. Functionally, transfers and isomerizes the ribose moiety from AdoMet to the 7-aminomethyl group of 7-deazaguanine (preQ1-tRNA) to give epoxyqueuosine (oQ-tRNA). The protein is S-adenosylmethionine:tRNA ribosyltransferase-isomerase of Aquifex aeolicus (strain VF5).